We begin with the raw amino-acid sequence, 211 residues long: tRNA (guanine-N(7)-)-methyltransferase (211 aa).

Residues glutamate 37, aspartate 62, glutamate 89, and aspartate 112 each coordinate S-adenosyl-L-methionine. Residue aspartate 112 is part of the active site. 2 residues coordinate substrate: lysine 116 and aspartate 148.

Belongs to the class I-like SAM-binding methyltransferase superfamily. TrmB family.

The catalysed reaction is guanosine(46) in tRNA + S-adenosyl-L-methionine = N(7)-methylguanosine(46) in tRNA + S-adenosyl-L-homocysteine. It functions in the pathway tRNA modification; N(7)-methylguanine-tRNA biosynthesis. Catalyzes the formation of N(7)-methylguanine at position 46 (m7G46) in tRNA. This chain is tRNA (guanine-N(7)-)-methyltransferase, found in Geobacter metallireducens (strain ATCC 53774 / DSM 7210 / GS-15).